The following is a 213-amino-acid chain: Large ribosomal subunit protein uL1 (213 aa).

The protein belongs to the universal ribosomal protein uL1 family. In terms of assembly, part of the 50S ribosomal subunit.

Functionally, binds directly to 23S rRNA. Probably involved in E site tRNA release. Protein L1 is also a translational repressor protein, it controls the translation of its operon by binding to its mRNA. In Methanoculleus marisnigri (strain ATCC 35101 / DSM 1498 / JR1), this protein is Large ribosomal subunit protein uL1.